The chain runs to 2710 residues: Serine/threonine-protein kinase ATR (2710 aa).

The FAT domain maps to 1647-2257; sequence TLAKASFRCQ…LWMMAAVSKS (611 aa). The PI3K/PI4K catalytic domain occupies 2368–2680; the sequence is IADDAEILNS…GVNAAPSLPL (313 aa). A G-loop region spans residues 2374–2380; it reads ILNSLQK. The interval 2545 to 2553 is catalytic loop; it reads GLGDRHGEN. The tract at residues 2565-2589 is activation loop; that stretch reads HVDFSCLFDKGLLLEKPEVVPFRFT. One can recognise an FATC domain in the interval 2678–2710; the sequence is LPLSVEGQARRLIAEAVSHSNLGKMYVWWMAWF.

Belongs to the PI3/PI4-kinase family. ATM subfamily.

The protein resides in the nucleus. The catalysed reaction is L-seryl-[protein] + ATP = O-phospho-L-seryl-[protein] + ADP + H(+). The enzyme catalyses L-threonyl-[protein] + ATP = O-phospho-L-threonyl-[protein] + ADP + H(+). Probable serine/threonine kinase. Seems to play a central role in cell-cycle regulation by transmitting DNA damage signals to downstream effectors of cell-cycle progression. May recognize the substrate consensus sequence [ST]-Q and phosphorylate histone variant H2AX to form H2AXS139ph at sites of DNA damage, thereby regulating DNA damage response mechanism. The polypeptide is Serine/threonine-protein kinase ATR (Oryza sativa subsp. indica (Rice)).